The following is a 511-amino-acid chain: MKEYRVYLERARFFQQDFLYPLIFREYIYGLAYSHKDPRSIFVENGGYDNKYSLLNVKRLITRMYQQNHLIISTNDSNKNPFFGYNKNFDFQIIAEGFAILVEIPFLPQLSSSLEEAEIIKSYKNVRSIHSIFPFLEDKFTYLNYVSDIRIPYPIHLEILVQILRYWVKDVSFFHLLRLFLYDFSNWIPTKKSISTFSKSNPRLFLFLYNFYVCEYESIFLFLRNKSSHLRLKSFSVFFERIFFYAKREHLVEVFSKDFSYTLPFFKDPNIHYVRYQGKCILASKNVPFLMNKWNHYFIHLWQCFFDVWSQPRTININQLSEHSFQLLGYFSNVRLNRSVVRSQMLQNTFLIEIVSKKLDIIVPFIPLIRSLAKAKFCNVLGHPISKPVWADSSDFDIIERFLRICRNLCHYYHGSSTKKSLYRIKYILRLSCIKTLACKHKSTVRAFLNRSGSEELLEEFFTEEEEILPWKFQILTLLCHSQSFSLHRYERKYRIWYLDILFSNDLVNDE.

It belongs to the intron maturase 2 family. MatK subfamily.

Its subcellular location is the plastid. It localises to the chloroplast. Functionally, usually encoded in the trnK tRNA gene intron. Probably assists in splicing its own and other chloroplast group II introns. This Trifolium burchellianum (Wild clover) protein is Maturase K.